The following is a 113-amino-acid chain: Mini zinc finger protein 3 (113 aa).

The ZF-HD dimerization-type; degenerate zinc-finger motif lies at 24–83; the sequence is YGECRRNHAASTGGHAVDGCREFIAAEDGGGGNSTGAVGVAAAALKCAACGCHRSFHRRV. Positions 93–113 are disordered; sequence DCDSGDTSSSSPSSSSSLSSE. The span at 97-113 shows a compositional bias: low complexity; the sequence is GDTSSSSPSSSSSLSSE.

As to quaternary structure, homo- and heterodimers.

The protein localises to the cytoplasm. In terms of biological role, inhibits zinc finger homeodomain (ZHD) transcription factors, by interacting with them to prevent both their nuclear localization and their DNA-binding properties. The chain is Mini zinc finger protein 3 (MIF3) from Oryza sativa subsp. indica (Rice).